The primary structure comprises 189 residues: Chitin synthase 1 (189 aa).

The protein belongs to the chitin synthase family. Class I subfamily.

It is found in the cell membrane. The enzyme catalyses [(1-&gt;4)-N-acetyl-beta-D-glucosaminyl](n) + UDP-N-acetyl-alpha-D-glucosamine = [(1-&gt;4)-N-acetyl-beta-D-glucosaminyl](n+1) + UDP + H(+). Polymerizes chitin, a structural polymer of the cell wall and septum, by transferring the sugar moiety of UDP-GlcNAc to the non-reducing end of the growing chitin polymer. The sequence is that of Chitin synthase 1 (CHS1) from Rhinocladiella atrovirens.